Here is a 118-residue protein sequence, read N- to C-terminus: MRNKYIEAFENAQIAGKNIPDFRAGDTLRVATRIHEGDKTRIQNFEGICIARRGSGTGETFIIRKIGANSVGVERIFPIFSDSIEEIKVLRKGRVRRAKLFYLRELRGKAAKIRELRK.

Belongs to the bacterial ribosomal protein bL19 family.

This protein is located at the 30S-50S ribosomal subunit interface and may play a role in the structure and function of the aminoacyl-tRNA binding site. In Campylobacter concisus (strain 13826), this protein is Large ribosomal subunit protein bL19.